A 643-amino-acid chain; its full sequence is Phosphoenolpyruvate carboxykinase [GTP] (643 aa).

Substrate-binding positions include arginine 102 and 253–255 (YGG). Mn(2+)-binding residues include lysine 262 and histidine 282. Serine 304 is a substrate binding site. 305 to 310 (ACGKTN) is a GTP binding site. Cysteine 306 is an active-site residue. Aspartate 329 contributes to the Mn(2+) binding site. Position 422–424 (422–424 (NSR)) interacts with substrate. GTP is bound by residues arginine 424, arginine 455, and 548-551 (YGDN).

The protein belongs to the phosphoenolpyruvate carboxykinase [GTP] family. As to quaternary structure, monomer. The cofactor is Mn(2+).

It catalyses the reaction oxaloacetate + GTP = phosphoenolpyruvate + GDP + CO2. Its function is as follows. In parasitic nematodes PEPCK carboxylates phosphoenolpyruvate to oxaloacetate thus introducing the products of glycolysis to mitochondrial metabolism. In terms of biological role, catalyzes the conversion of oxaloacetate (OAA) to phosphoenolpyruvate (PEP), the rate-limiting step in the metabolic pathway that produces glucose from lactate and other precursors derived from the citric acid cycle. The chain is Phosphoenolpyruvate carboxykinase [GTP] (PEPCK) from Ascaris suum (Pig roundworm).